The sequence spans 306 residues: Diterpene cyclase eriG (306 aa).

2 consecutive transmembrane segments (helical) span residues 13–33 (IFFG…SIFA) and 43–63 (ATLV…IYFF). The N-linked (GlcNAc...) asparagine glycan is linked to Asn64. 4 helical membrane passes run 115–135 (FLPE…TSYG), 161–181 (IAPA…WAGL), 213–233 (LIIT…AGIF), and 265–285 (MFYT…GLGL).

The protein belongs to the UbiA prenyltransferase family. Mg(2+) serves as cofactor.

The protein resides in the membrane. It carries out the reaction (2E,6E,10E)-geranylgeranyl diphosphate = (-)-cyatha-3,12-diene + diphosphate. It participates in secondary metabolite biosynthesis. With respect to regulation, EDTA completely blocks the reaction. Functionally, diterpene cyclase; part of the gene cluster that mediates the biosynthesis of erinacines, cyathane-xylosides that show unique biological activities, including leishmanicidal activity, stimulating activity for nerve growth-factor synthesis, and agonistic activity toward the kappa opioid receptor. Within the pathway, eriG acts as a diterpene cyclase that converts geranylgeranyl diphosphate (GGPP) into cyatha-3,12-diene. EriG is unable to use geranyl diphosphate (GPP) or farnesyl diphosphate (FPP) as substrates. The first step of the erinacines biosynthesis pathway is catalyzed by the geranylgeranyl diphosphate (GGPP) synthase eriE via conversion of farnesyl pyrophosphate and isopentyl pyrophosphate into geranylgeranyl pyrophosphate (GGPP). GGPP is then substrate of the diterpene cyclase eriG for the production of cyatha-3,12-diene. The cytochrome P450 monooxygenase eriI then hydroxylates cyatha-3,12-diene at C-14 of the seven-membered ring to produce erinacol, which is further hydroxylated at C-15 by the cytochrome P450 monooxygenase eriC to yield cyathadiol. The cytochrome P450 monooxygenase eriA then catalyzes C-11 hydroxylation in the presence of the short chain dehydrogenase/reductase (SDR) eriH, which leads to the production of cyathatriol. The acetyltransferase eriL converts cyathatriol into 11-O-acetyl-cyathatriol. The SDR eriH catalyzes further oxidation of 11-O-acetyl-cyathatriol into 1-O-acetylcyathin A3. Finally, the glycosyl transferase eriJ tranfers xylose from UDP-xylose onto C-14 of 11-O-acetyl-cyathatriol to form eracine Q. EriJ is also able to convert 11-O-acetyl-cyathatriol to eracine Q2 by using UDP-D-glucose as cosubstrate, but at a lower rate. The protein is Diterpene cyclase eriG of Hericium erinaceus (Lion's mane mushroom).